Consider the following 149-residue polypeptide: Calmodulin (149 aa).

At A2 the chain carries N-acetylalanine. EF-hand domains follow at residues E8–N43, P44–D79, D81–K116, and L117–K149. Ca(2+) contacts are provided by D21, D23, D25, T27, E32, D57, D59, N61, T63, E68, D94, D96, N98, and E105. K116 is subject to N6,N6,N6-trimethyllysine. Ca(2+) contacts are provided by D130, D132, D134, Q136, and E141.

Belongs to the calmodulin family.

Calmodulin mediates the control of a large number of enzymes, ion channels and other proteins by Ca(2+). Among the enzymes to be stimulated by the calmodulin-Ca(2+) complex are a number of protein kinases and phosphatases. This is Calmodulin from Heterocapsa triquetra (Dinoflagellate).